The chain runs to 511 residues: Inositol-3-phosphate synthase isozyme 1 (511 aa).

Positions 71, 72, 73, 74, 144, 181, 191, 194, 231, 232, 233, 234, 282, 283, 307, 310, 341, 342, 343, 356, 394, 395, 423, and 424 each coordinate NAD(+).

The protein belongs to the myo-inositol 1-phosphate synthase family. Homotrimer or homotetramer. Interacts with ATXR5 and ATXR6. It depends on NAD(+) as a cofactor. In terms of tissue distribution, expressed in siliques, leaves, roots, seed endosperm, but not in embryos. Highest expression in leaves, but restricted to vascular tissue in older leaves.

It localises to the cytoplasm. Its subcellular location is the cytosol. It is found in the nucleus. It catalyses the reaction D-glucose 6-phosphate = 1D-myo-inositol 3-phosphate. It participates in polyol metabolism; myo-inositol biosynthesis; myo-inositol from D-glucose 6-phosphate: step 1/2. Functionally, key enzyme in myo-inositol biosynthesis pathway that catalyzes the conversion of glucose 6-phosphate to 1-myo-inositol 1-phosphate in a NAD-dependent manner. Catalyzes the majority of myo-inositol synthesis required for plant growth and development. Acts as a repressor of programmed cell death and protects plant cells against cell death under high light intensity or long days. Controls its own transcription by inhibiting ATXR6 activity. Reduces the deposition of inhibitory histone marks on its own promoter. In Arabidopsis thaliana (Mouse-ear cress), this protein is Inositol-3-phosphate synthase isozyme 1 (IPS1).